The primary structure comprises 46 residues: Iota-conotoxin-like R11.17 (46 aa).

4-hydroxyproline is present on residues P2 and P11. Cystine bridges form between C5-C19, C12-C22, C18-C27, and C21-C38. 4-hydroxyproline is present on P29. F44 bears the D-phenylalanine mark.

Belongs to the conotoxin I1 superfamily. As to expression, expressed by the venom duct.

The protein localises to the secreted. Iota-conotoxins bind to voltage-gated sodium channels (Nav) and act as agonists by shifting the voltage-dependence of activation to more hyperpolarized levels. Produces general excitatory symptoms. This Conus radiatus (Rayed cone) protein is Iota-conotoxin-like R11.17.